A 356-amino-acid polypeptide reads, in one-letter code: Dual-specificity RNA methyltransferase RlmN (356 aa).

The active-site Proton acceptor is Glu-89. The region spanning 108–341 is the Radical SAM core domain; sequence SHARYTICVS…CTIRESKGLD (234 aa). A disulfide bridge connects residues Cys-115 and Cys-346. 3 residues coordinate [4Fe-4S] cluster: Cys-122, Cys-126, and Cys-129. S-adenosyl-L-methionine-binding positions include 172 to 173, Ser-204, 227 to 229, and Asn-303; these read GE and SLH. Cys-346 acts as the S-methylcysteine intermediate in catalysis.

Belongs to the radical SAM superfamily. RlmN family. It depends on [4Fe-4S] cluster as a cofactor.

It is found in the cytoplasm. It catalyses the reaction adenosine(2503) in 23S rRNA + 2 reduced [2Fe-2S]-[ferredoxin] + 2 S-adenosyl-L-methionine = 2-methyladenosine(2503) in 23S rRNA + 5'-deoxyadenosine + L-methionine + 2 oxidized [2Fe-2S]-[ferredoxin] + S-adenosyl-L-homocysteine. It carries out the reaction adenosine(37) in tRNA + 2 reduced [2Fe-2S]-[ferredoxin] + 2 S-adenosyl-L-methionine = 2-methyladenosine(37) in tRNA + 5'-deoxyadenosine + L-methionine + 2 oxidized [2Fe-2S]-[ferredoxin] + S-adenosyl-L-homocysteine. Its function is as follows. Specifically methylates position 2 of adenine 2503 in 23S rRNA and position 2 of adenine 37 in tRNAs. m2A2503 modification seems to play a crucial role in the proofreading step occurring at the peptidyl transferase center and thus would serve to optimize ribosomal fidelity. This chain is Dual-specificity RNA methyltransferase RlmN, found in Campylobacter jejuni subsp. jejuni serotype O:2 (strain ATCC 700819 / NCTC 11168).